The primary structure comprises 348 residues: Sensor protein VraS (348 aa).

The next 2 helical transmembrane spans lie at 13–33 and 43–63; these read ILVY…VNII and IFGI…CIIV. In terms of domain architecture, Histidine kinase spans 150-341; sequence RLARELHDSV…RIEVKAPLNK (192 aa).

The protein resides in the cell membrane. The catalysed reaction is ATP + protein L-histidine = ADP + protein N-phospho-L-histidine.. Its function is as follows. Member of the two-component regulatory system VraS/VraR involved in the control of the cell wall peptidoglycan biosynthesis. Probably activates VraR by phosphorylation. This Staphylococcus epidermidis (strain ATCC 35984 / DSM 28319 / BCRC 17069 / CCUG 31568 / BM 3577 / RP62A) protein is Sensor protein VraS (vraS).